The chain runs to 201 residues: Large ribosomal subunit protein uL4 (201 aa).

Residues 43–66 (TRAQKTRSEVSGGGKKPWRQKGTG) are disordered.

The protein belongs to the universal ribosomal protein uL4 family. As to quaternary structure, part of the 50S ribosomal subunit.

Functionally, one of the primary rRNA binding proteins, this protein initially binds near the 5'-end of the 23S rRNA. It is important during the early stages of 50S assembly. It makes multiple contacts with different domains of the 23S rRNA in the assembled 50S subunit and ribosome. In terms of biological role, forms part of the polypeptide exit tunnel. This is Large ribosomal subunit protein uL4 from Tolumonas auensis (strain DSM 9187 / NBRC 110442 / TA 4).